The primary structure comprises 141 residues: Large ribosomal subunit protein uL11 (141 aa).

Belongs to the universal ribosomal protein uL11 family. As to quaternary structure, part of the ribosomal stalk of the 50S ribosomal subunit. Interacts with L10 and the large rRNA to form the base of the stalk. L10 forms an elongated spine to which L12 dimers bind in a sequential fashion forming a multimeric L10(L12)X complex. Post-translationally, one or more lysine residues are methylated.

Forms part of the ribosomal stalk which helps the ribosome interact with GTP-bound translation factors. The protein is Large ribosomal subunit protein uL11 of Synechococcus elongatus (strain ATCC 33912 / PCC 7942 / FACHB-805) (Anacystis nidulans R2).